The chain runs to 443 residues: Tol-Pal system protein TolB (443 aa).

A signal peptide spans 1–31 (MTRLAKGKWRSTLGAMMALAVMVAAIPQARA). Over residues 423–432 (NERQISTPTE) the composition is skewed to polar residues. Residues 423-443 (NERQISTPTEASDPAWSPLLP) form a disordered region.

Belongs to the TolB family. As to quaternary structure, the Tol-Pal system is composed of five core proteins: the inner membrane proteins TolA, TolQ and TolR, the periplasmic protein TolB and the outer membrane protein Pal. They form a network linking the inner and outer membranes and the peptidoglycan layer.

It is found in the periplasm. Its function is as follows. Part of the Tol-Pal system, which plays a role in outer membrane invagination during cell division and is important for maintaining outer membrane integrity. This Rhodospirillum rubrum (strain ATCC 11170 / ATH 1.1.1 / DSM 467 / LMG 4362 / NCIMB 8255 / S1) protein is Tol-Pal system protein TolB.